The chain runs to 144 residues: Eukaryotic translation initiation factor 1A (144 aa).

Positions 1–15 (MPKNKGKGGKNRRRG) are enriched in basic residues. 2 disordered regions span residues 1–26 (MPKN…KREL) and 114–144 (KINE…IDDI). A compositionally biased stretch (basic and acidic residues) spans 16–26 (KNENESEKREL). Residues 22–96 (EKRELVFKED…NKADVILKYN (75 aa)) form the S1-like domain. Over residues 124-144 (GDDDEIQFDDIGDDDEDIDDI) the composition is skewed to acidic residues.

This sequence belongs to the eIF-1A family. In terms of assembly, component of the 43S pre-initiation complex (43S PIC), which is composed of the 40S ribosomal subunit, EIF1, eIF1A (EIF1AX), eIF3 complex, EIF5 and eIF2-GTP-initiator tRNA complex (eIF2 ternary complex). Interacts with EIF5; this interaction contributes to the maintenance of EIF1 within the open 43S PIC. Interacts through its C-terminal domain (CTD) with the CTD of EIF5B; from the location of the start codon by the 43S complex until the formation of the 80S complex.

It is found in the cytoplasm. Component of the 43S pre-initiation complex (43S PIC), which binds to the mRNA cap-proximal region, scans mRNA 5'-untranslated region, and locates the initiation codon. This protein enhances formation of the cap-proximal complex. Together with EIF1, facilitates scanning, start codon recognition, promotion of the assembly of 48S complex at the initiation codon (43S PIC becomes 48S PIC after the start codon is reached), and dissociation of aberrant complexes. After start codon location, together with EIF5B orients the initiator methionine-tRNA in a conformation that allows 60S ribosomal subunit joining to form the 80S initiation complex. Is released after 80S initiation complex formation, just after GTP hydrolysis by EIF5B, and before release of EIF5B. Its globular part is located in the A site of the 40S ribosomal subunit. Its interaction with EIF5 during scanning contribute to the maintenance of EIF1 within the open 43S PIC. In contrast to yeast orthologs, does not bind EIF1. The protein is Eukaryotic translation initiation factor 1A (Eif1a) of Mus musculus (Mouse).